The primary structure comprises 226 residues: Uridylate kinase (226 aa).

6–10 (KISGK) is an ATP binding site. Residue G43 participates in UMP binding. Residues G44 and R48 each coordinate ATP. UMP-binding positions include D65 and 113 to 119 (FQPGQST). Positions 139, 140, 145, and 148 each coordinate ATP.

This sequence belongs to the UMP kinase family. Homohexamer.

It localises to the cytoplasm. The enzyme catalyses UMP + ATP = UDP + ADP. Its pathway is pyrimidine metabolism; CTP biosynthesis via de novo pathway; UDP from UMP (UMPK route): step 1/1. Inhibited by UTP. Catalyzes the reversible phosphorylation of UMP to UDP. The protein is Uridylate kinase of Saccharolobus islandicus (strain M.16.27) (Sulfolobus islandicus).